Here is a 4486-residue protein sequence, read N- to C-terminus: Dynein axonemal heavy chain 9 (4486 aa).

Positions 1 to 1831 (MRLAEERAAL…FANICDAQFL (1831 aa)) are stem. Coiled coils occupy residues 381–410 (DLLR…EFQD), 504–529 (QSTD…LGTI), 639–662 (AEGK…ETRL), 752–823 (TLLE…TWVT), and 1326–1355 (NINV…AWDA). AAA stretches follow at residues 1832-2053 (YSYE…VLVV), 2113-2334 (ALVR…TRFK), 2440-2688 (EFDP…IFQG), and 2787-3036 (NHNE…EQRY). ATP is bound by residues 1870–1877 (GPAGTGKT), 2151–2158 (GGAGTGKS), 2478–2485 (GTAGTGKS), and 2825–2832 (GVGGSGKQ). Coiled-coil stretches lie at residues 3051–3154 (YQSL…AKAE), 3285–3341 (KRQA…AEVT), and 3640–3675 (LVEN…REHY). Residues 3051–3341 (YQSLLHRHRK…LKCQQEAEVT (291 aa)) are stalk. AAA stretches follow at residues 3429 to 3656 (LMDD…EVEK) and 3866 to 4092 (LRDF…VLYN).

The protein belongs to the dynein heavy chain family. In terms of assembly, consists of at least two heavy chains and a number of intermediate and light chains. Interacts with ODAD1. Expressed in upper and lower respiratory airway epithelia (at protein level). Not detected in spermatozoa (at protein level).

It is found in the cytoplasm. Its subcellular location is the cytoskeleton. The protein localises to the cilium axoneme. Its function is as follows. Force generating protein required for cilia beating in respiratory epithelia. Produces force towards the minus ends of microtubules. Dynein has ATPase activity; the force-producing power stroke is thought to occur on release of ADP. This is Dynein axonemal heavy chain 9 from Homo sapiens (Human).